A 489-amino-acid polypeptide reads, in one-letter code: Cytochrome P450 monooxygenase trt6 (489 aa).

A helical transmembrane segment spans residues 10–30; the sequence is SLWSFGLWILVILSPVLFFAS. N-linked (GlcNAc...) asparagine glycans are attached at residues Asn-364 and Asn-407. Residue Cys-430 participates in heme binding.

This sequence belongs to the cytochrome P450 family. The cofactor is heme.

Its subcellular location is the membrane. It functions in the pathway secondary metabolite biosynthesis; terpenoid biosynthesis. Functionally, cytochrome P450 monooxygenase; part of the gene cluster that mediates the biosynthesis of terretonin, a fungal meroterpenoid that acts as a mycotoxin. The first step of the pathway is the synthesis of 3,5-dimethylorsellinic acid (DMOA) by the polyketide synthase trt4. DMOA is then prenylated into farnesyl-DMOA by the polyprenyl transferase trt2. Methylation by the methyltransferase trt5 then leads to farnesyl-DMOA methyl ester which is further subject to epoxidation by the FAD-dependent monooxygenase trt8 to yield epoxyfarnesyl-DMOA methyl ester. Cyclization of epoxyfarnesyl-DMOA methyl ester by the terpene cyclase trt1 leads to a tetracycle intermediate which is in turn converted to preterretonin. Dehydrogenase trt9 comes next to transform preterretonin to preterrenoid. The FAD-dependent monooxygenase trt3 is then required for the C-hydroxylation at C16 of preterrenoid to yield terrenoid. The cytochrome P450 trt6 catalyzes three successive oxidations to transform terrenoid into an unstable intermediate, which then undergoes the D-ring expansion and unusual rearrangement of the methoxy group to afford the core skeleton of terretonin. Trt14 catalyzes the D-ring expansion of terretonin involving intramolecular methoxy rearrangement as well as the hydrolysis of the expanded D-ring and the methyl ester moiety. Finally, the nonheme iron-dependent dioxygenase trt7 accomplishes the last two oxidation reactions steps to complete the biosynthesis of terretonin. Terretonin C is produced via spontaneous decarboxylation of the terretonin precursor. Another shunt product of the terretonin biosynthesis is dihydrofarnesyl-DMOA, derived from epoxyfarnesyl-DMOA through hydrolysis of the epoxide. The protein is Cytochrome P450 monooxygenase trt6 of Aspergillus terreus (strain NIH 2624 / FGSC A1156).